A 95-amino-acid chain; its full sequence is Aspartyl/glutamyl-tRNA(Asn/Gln) amidotransferase subunit C (95 aa).

The protein belongs to the GatC family. As to quaternary structure, heterotrimer of A, B and C subunits.

The enzyme catalyses L-glutamyl-tRNA(Gln) + L-glutamine + ATP + H2O = L-glutaminyl-tRNA(Gln) + L-glutamate + ADP + phosphate + H(+). It catalyses the reaction L-aspartyl-tRNA(Asn) + L-glutamine + ATP + H2O = L-asparaginyl-tRNA(Asn) + L-glutamate + ADP + phosphate + 2 H(+). Allows the formation of correctly charged Asn-tRNA(Asn) or Gln-tRNA(Gln) through the transamidation of misacylated Asp-tRNA(Asn) or Glu-tRNA(Gln) in organisms which lack either or both of asparaginyl-tRNA or glutaminyl-tRNA synthetases. The reaction takes place in the presence of glutamine and ATP through an activated phospho-Asp-tRNA(Asn) or phospho-Glu-tRNA(Gln). The sequence is that of Aspartyl/glutamyl-tRNA(Asn/Gln) amidotransferase subunit C from Vesicomyosocius okutanii subsp. Calyptogena okutanii (strain HA).